A 443-amino-acid chain; its full sequence is Mitochondrial distribution and morphology protein 10 (443 aa).

This sequence belongs to the MDM10 family. Component of the ER-mitochondria encounter structure (ERMES) or MDM complex, composed of MMM1, MDM10, MDM12 and MDM34. Associates with the mitochondrial outer membrane sorting assembly machinery SAM(core) complex.

It localises to the mitochondrion outer membrane. Its function is as follows. Component of the ERMES/MDM complex, which serves as a molecular tether to connect the endoplasmic reticulum and mitochondria. Components of this complex are involved in the control of mitochondrial shape and protein biogenesis and may function in phospholipid exchange. MDM10 is involved in the late assembly steps of the general translocase of the mitochondrial outer membrane (TOM complex). Functions in the TOM40-specific route of the assembly of outer membrane beta-barrel proteins, including the association of TOM40 with the receptor TOM22 and small TOM proteins. Can associate with the SAM(core) complex as well as the MDM12-MMM1 complex, both involved in late steps of the major beta-barrel assembly pathway, that is responsible for biogenesis of all outer membrane beta-barrel proteins. May act as a switch that shuttles between both complexes and channels precursor proteins into the TOM40-specific pathway. Plays a role in mitochondrial morphology and in the inheritance of mitochondria. This Pyricularia oryzae (strain 70-15 / ATCC MYA-4617 / FGSC 8958) (Rice blast fungus) protein is Mitochondrial distribution and morphology protein 10.